The sequence spans 217 residues: MQDSSKNKQPCVSWKVSPLKAKAMSPDDVSRLFCKSSTSSATRKHDPFHKLWDRLQPKAQSTIQRTSSLPVPSSSNFKERLNNIGGLKRSRTLESSYEDETETANKLSRVSSLVSVIRQTIDRKKSLERRVREEQEEKTDNEDDNDVEISTQESLENNGLAEKKDDTSSLATLEDDIEGQEFSFDDQDLQMLQDIEDQWLSSQKQQGSPLTSDHISK.

Over residues 59-76 (AQSTIQRTSSLPVPSSSN) the composition is skewed to polar residues. Disordered stretches follow at residues 59 to 105 (AQST…ETAN) and 124 to 217 (KKSL…HISK). Serine 68 carries the phosphoserine modification. At threonine 92 the chain carries Phosphothreonine. The span at 124 to 135 (KKSLERRVREEQ) shows a compositional bias: basic and acidic residues. Residues 136–147 (EEKTDNEDDNDV) are compositionally biased toward acidic residues. Polar residues predominate over residues 148 to 157 (EISTQESLEN). The span at 173-188 (LEDDIEGQEFSFDDQD) shows a compositional bias: acidic residues. Over residues 199-217 (WLSSQKQQGSPLTSDHISK) the composition is skewed to polar residues.

This is an uncharacterized protein from Schizosaccharomyces pombe (strain 972 / ATCC 24843) (Fission yeast).